The primary structure comprises 507 residues: Glycine, alanine and asparagine-rich protein (507 aa).

Residues 1 to 17 (MLRVPLLVLCLALSVGA) form the signal peptide. Residues 158-185 (SAQALASATAELQAAQDAYDQASAYAEA) adopt a coiled-coil conformation. The span at 462 to 498 (GNGNGGNGRNGNGGNGRNGNGGNGGNGNGRNGRGGRY) shows a compositional bias: gly residues. The segment at 462–507 (GNGNGGNGRNGNGGNGRNGNGGNGGNGNGRNGRGGRYYYGSSDYYY) is disordered.

As to expression, component of the acid-soluble and acid-insoluble organic matrix of calcified shell layers (at protein level).

The protein localises to the secreted. This chain is Glycine, alanine and asparagine-rich protein, found in Haliotis asinina (Donkey's ear abalone).